Consider the following 96-residue polypeptide: Protein Vpr (96 aa).

The tract at residues 1–42 (MEQAPEDQGPQREPYNEWALELLEELKQEAVRHFPRPWLHNL) is homooligomerization. 3 positions are modified to phosphoserine; by host: Ser79, Ser94, and Ser96.

It belongs to the HIV-1 VPR protein family. Homooligomer, may form homodimer. Interacts with p6-gag region of the Pr55 Gag precursor protein through a (Leu-X-X)4 motif near the C-terminus of the P6gag protein. Interacts with host UNG. May interact with host RAD23A/HHR23A. Interacts with host VPRBP/DCAF1, leading to hijack the CUL4A-RBX1-DDB1-DCAF1/VPRBP complex, mediating ubiquitination of host proteins such as TERT and ZGPAT and arrest of the cell cycle in G2 phase. Post-translationally, phosphorylated on several residues by host. These phosphorylations regulate VPR activity for the nuclear import of the HIV-1 pre-integration complex.

It is found in the virion. The protein localises to the host nucleus. Its subcellular location is the host extracellular space. Functionally, during virus replication, may deplete host UNG protein, and incude G2-M cell cycle arrest. Acts by targeting specific host proteins for degradation by the 26S proteasome, through association with the cellular CUL4A-DDB1 E3 ligase complex by direct interaction with host VPRPB/DCAF-1. Cell cycle arrest reportedly occurs within hours of infection and is not blocked by antiviral agents, suggesting that it is initiated by the VPR carried into the virion. Additionally, VPR induces apoptosis in a cell cycle dependent manner suggesting that these two effects are mechanistically linked. Detected in the serum and cerebrospinal fluid of AIDS patient, VPR may also induce cell death to bystander cells. During virus entry, plays a role in the transport of the viral pre-integration (PIC) complex to the host nucleus. This function is crucial for viral infection of non-dividing macrophages. May act directly at the nuclear pore complex, by binding nucleoporins phenylalanine-glycine (FG)-repeat regions. The sequence is that of Protein Vpr from Homo sapiens (Human).